Reading from the N-terminus, the 367-residue chain is Heparan sulfate glucosamine 3-O-sulfotransferase 2 (367 aa).

The Cytoplasmic portion of the chain corresponds to 1–19 (MAYRVLGRAGPPQPRRARR). Residues 20 to 39 (LLFAFTLSLSCTYLCYSFLC) traverse the membrane as a helical; Signal-anchor for type II membrane protein segment. The Lumenal segment spans residues 40 to 367 (CCDGLGQSRL…ETVGQDFRWE (328 aa)). The segment at 66 to 115 (LLAKSRPCDPPGPTPSEPSAPSAPAAAAPAPRLSGSNHSGSPKPGTKRLP) is disordered. Residues 73–83 (CDPPGPTPSEP) show a composition bias toward pro residues. Over residues 84-96 (SAPSAPAAAAPAP) the composition is skewed to low complexity. Asparagine 102 carries an N-linked (GlcNAc...) asparagine glycan. 124 to 128 (KGGTR) is a 3'-phosphoadenylyl sulfate binding site. Substrate is bound by residues 146–152 (EPHFFDR) and 177–180 (KTPS). Asparagine 193 carries an N-linked (GlcNAc...) asparagine glycan. 2 residues coordinate 3'-phosphoadenylyl sulfate: arginine 205 and serine 213. N-linked (GlcNAc...) asparagine glycosylation is present at asparagine 235. Position 245 to 246 (245 to 246 (WN)) interacts with substrate. Asparagine 306 is a glycosylation site (N-linked (GlcNAc...) asparagine). Cysteine 313 and cysteine 325 are oxidised to a cystine. 3'-phosphoadenylyl sulfate is bound at residue 330–334 (KGRTH).

This sequence belongs to the sulfotransferase 1 family.

The protein localises to the golgi apparatus membrane. It catalyses the reaction alpha-D-glucosaminyl-[heparan sulfate](n) + 3'-phosphoadenylyl sulfate = 3-sulfo-alpha-D-glucosaminyl-[heparan sulfate](n) + adenosine 3',5'-bisphosphate + H(+). In terms of biological role, sulfotransferase that utilizes 3'-phospho-5'-adenylyl sulfate (PAPS) to catalyze the transfer of a sulfo group to an N-unsubstituted glucosamine linked to a 2-O-sulfo iduronic acid unit on heparan sulfate. Catalyzes the O-sulfation of glucosamine in GlcA2S-GlcNS. Unlike HS3ST1/3-OST-1, does not convert non-anticoagulant heparan sulfate to anticoagulant heparan sulfate. The protein is Heparan sulfate glucosamine 3-O-sulfotransferase 2 (Hs3st2) of Mus musculus (Mouse).